We begin with the raw amino-acid sequence, 312 residues long: Chitin deacetylase 2 (312 aa).

The signal sequence occupies residues 1–44 (MRIQLNTIDLQCIIALSCLGQFVHAEANREDLKQIDFQFPVLER). Residues cysteine 117 and cysteine 300 are joined by a disulfide bond. The NodB homology domain maps to 118–307 (SKLSQTFDDG…SHCVGGIDYI (190 aa)). Aspartate 125 acts as the Proton acceptor in catalysis. Residue aspartate 125 participates in acetate binding. A Co(2+)-binding site is contributed by aspartate 126. N-linked (GlcNAc...) asparagine glycosylation occurs at asparagine 142. The Co(2+) site is built by histidine 172 and histidine 176. N-linked (GlcNAc...) asparagine glycans are attached at residues asparagine 181 and asparagine 199. Tyrosine 213 serves as a coordination point for acetate. Asparagine 246 and asparagine 263 each carry an N-linked (GlcNAc...) asparagine glycan. Histidine 273 functions as the Proton donor in the catalytic mechanism.

Belongs to the polysaccharide deacetylase family. Monomer. Co(2+) serves as cofactor. N-glycosylated.

The protein localises to the prospore. It carries out the reaction [(1-&gt;4)-N-acetyl-beta-D-glucosaminyl](n) + n H2O = chitosan + n acetate. In terms of biological role, hydrolyzes the N-acetamido groups of N-acetyl-D-glucosamine residues in chitin to form chitosan and acetate. Chitosan is a component of the spore wall. The polypeptide is Chitin deacetylase 2 (Saccharomyces cerevisiae (strain ATCC 204508 / S288c) (Baker's yeast)).